The primary structure comprises 464 residues: ERO1-like protein alpha (464 aa).

The N-terminal stretch at 1–23 (MGRGWGLLVGLLGVVWLLRSGQG) is a signal peptide. Cystine bridges form between cysteine 35–cysteine 48, cysteine 37–cysteine 46, cysteine 85–cysteine 387, cysteine 94–cysteine 99, cysteine 94–cysteine 130, cysteine 99–cysteine 104, cysteine 207–cysteine 237, and cysteine 390–cysteine 393. Phosphoserine is present on residues serine 106, serine 142, and serine 144. FAD contacts are provided by arginine 186, threonine 188, and tryptophan 199. Positions 248 and 251 each coordinate FAD. Asparagine 276 carries an N-linked (GlcNAc...) asparagine glycan. FAD is bound by residues arginine 283 and arginine 296. Asparagine 380 carries N-linked (GlcNAc...) asparagine glycosylation.

This sequence belongs to the EROs family. In terms of assembly, predominantly monomer. May function both as a monomer and a homodimer. Interacts with PDILT. Interacts with ERP44; the interaction results in retention of ERO1A in the endoplasmic reticulum. FAD is required as a cofactor. N-glycosylated. In terms of processing, the Cys-94/Cys-99 and Cys-390/Cys-393 disulfide bonds constitute the redox-active center. The Cys-94/Cys-99 disulfide bond may accept electron from P4HB and funnel them to the active site disulfide Cys-390/Cys-393. The regulatory Cys-99/Cys-104 disulfide bond stabilizes the other regulatory bond Cys-94/Cys-130. Post-translationally, phosphorylated on Ser-144 by FAM20C in the Golgi which increases its enzymatic activity. Phosphorylation is induced by lactation. It is also induced by hypoxia and reductive stress.

Its subcellular location is the endoplasmic reticulum membrane. It is found in the golgi apparatus lumen. The protein resides in the secreted. It localises to the cell projection. The protein localises to the dendrite. With respect to regulation, enzyme activity is tightly regulated to prevent the accumulation of reactive oxygen species in the endoplasmic reticulum. Reversibly down-regulated by the formation of disulfide bonds between the active site Cys-94 and Cys-130, and between Cys-99 and Cys-104. Glutathione may be required to regulate its activity in the endoplasmic reticulum. In terms of biological role, oxidoreductase involved in disulfide bond formation in the endoplasmic reticulum. Efficiently reoxidizes P4HB/PDI, the enzyme catalyzing protein disulfide formation, in order to allow P4HB to sustain additional rounds of disulfide formation. Following P4HB reoxidation, passes its electrons to molecular oxygen via FAD, leading to the production of reactive oxygen species (ROS) in the cell. Required for the proper folding of immunoglobulins. Plays an important role in ER stress-induced, CHOP-dependent apoptosis by activating the inositol 1,4,5-trisphosphate receptor IP3R1. This chain is ERO1-like protein alpha, found in Rattus norvegicus (Rat).